Reading from the N-terminus, the 383-residue chain is Cytochrome b (383 aa).

4 helical membrane-spanning segments follow: residues 30–50 (FGSLLGLCLGIQILTGVLLAM), 74–96 (WILRYVHANGASLFFICVYCHIG), 109–129 (TWIVGVLIYFIMMLTAFIGYV), and 175–195 (FFSLHYLLPFVLVGLVLAHLL). Heme b-binding residues include H80 and H94. Residues H179 and H193 each coordinate heme b. H198 serves as a coordination point for a ubiquinone. Transmembrane regions (helical) follow at residues 221-241 (FTIKDILGFLILLGVFVIIGI), 289-309 (GVLALFASILVLLLMPILDRS), 320-340 (AKFFFWFIVGDFFILTWIGSA), and 345-365 (EPYVLIGRIATIFYFGYFLVL).

The protein belongs to the cytochrome b family. The main subunits of complex b-c1 are: cytochrome b, cytochrome c1 and the Rieske protein. The cofactor is heme b.

The protein localises to the mitochondrion inner membrane. Functionally, component of the ubiquinol-cytochrome c reductase complex (complex III or cytochrome b-c1 complex) that is part of the mitochondrial respiratory chain. The b-c1 complex mediates electron transfer from ubiquinol to cytochrome c. Contributes to the generation of a proton gradient across the mitochondrial membrane that is then used for ATP synthesis. This chain is Cytochrome b (mt:Cyt-b), found in Trichoplax adhaerens (Trichoplax reptans).